The chain runs to 273 residues: Formamidopyrimidine-DNA glycosylase (273 aa).

The Schiff-base intermediate with DNA role is filled by Pro-2. Glu-3 serves as the catalytic Proton donor. The Proton donor; for beta-elimination activity role is filled by Lys-58. DNA is bound by residues His-91, Arg-110, and Arg-153. The segment at 238 to 272 adopts an FPG-type zinc-finger fold; the sequence is KVYGKEGQPCPRCGEDFVKIKISGRGTTYCLHCQK. Arg-262 acts as the Proton donor; for delta-elimination activity in catalysis.

This sequence belongs to the FPG family. In terms of assembly, monomer. Requires Zn(2+) as cofactor.

It carries out the reaction Hydrolysis of DNA containing ring-opened 7-methylguanine residues, releasing 2,6-diamino-4-hydroxy-5-(N-methyl)formamidopyrimidine.. The enzyme catalyses 2'-deoxyribonucleotide-(2'-deoxyribose 5'-phosphate)-2'-deoxyribonucleotide-DNA = a 3'-end 2'-deoxyribonucleotide-(2,3-dehydro-2,3-deoxyribose 5'-phosphate)-DNA + a 5'-end 5'-phospho-2'-deoxyribonucleoside-DNA + H(+). Its function is as follows. Involved in base excision repair of DNA damaged by oxidation or by mutagenic agents. Acts as a DNA glycosylase that recognizes and removes damaged bases. Has a preference for oxidized purines, such as 7,8-dihydro-8-oxoguanine (8-oxoG). Has AP (apurinic/apyrimidinic) lyase activity and introduces nicks in the DNA strand. Cleaves the DNA backbone by beta-delta elimination to generate a single-strand break at the site of the removed base with both 3'- and 5'-phosphates. The sequence is that of Formamidopyrimidine-DNA glycosylase from Lactobacillus delbrueckii subsp. bulgaricus (strain ATCC 11842 / DSM 20081 / BCRC 10696 / JCM 1002 / NBRC 13953 / NCIMB 11778 / NCTC 12712 / WDCM 00102 / Lb 14).